The primary structure comprises 260 residues: POLG alternative reading frame (260 aa).

Disordered stretches follow at residues Met-1–Arg-50 and Ala-108–Gly-219. Low complexity-rich tracts occupy residues Ala-36–Arg-48, Gly-116–Gly-154, and Ala-164–Gly-186. Residues Ala-104 to Ala-130 form a required for nucleolar localization region. 2 stretches are compositionally biased toward gly residues: residues Leu-187–Arg-199 and Arg-209–Gly-219.

In terms of assembly, interacts with C1QBP; the interaction results in nucleolar localization of C1QBP, probably due to prevention of C1QBP maturation and redirection from mitochondria to nucleoli. Undergoes proteolytic cleavage to produce a secreted C-terminal fragment.

The protein localises to the nucleus. Its subcellular location is the nucleolus. The protein resides in the secreted. This Homo sapiens (Human) protein is POLG alternative reading frame.